A 129-amino-acid polypeptide reads, in one-letter code: Flagellar assembly factor FliW (129 aa).

Belongs to the FliW family. As to quaternary structure, interacts with flagellins FlaA and FlaB but not with FlaC; recognizes glycosylated and non-glycosylated FlaA equally. Interacts with CsrA. May form a 3-way complex of flagellin, FliS and FliW simultaneously in which FliS and FliW do not directly interact.

It localises to the cytoplasm. In terms of biological role, acts as an anti-CsrA protein, binds CsrA and prevents it from repressing translation of its target genes, one of which is flagellin. Binds to flagellin and participates in the assembly of the flagellum. Overexpression leads to increased levels of FlaA and FlaB, but levels of FlaC remain stable. Involved in post-transcriptional regulation of flagellin biosynthesis. The polypeptide is Flagellar assembly factor FliW (Campylobacter jejuni subsp. jejuni serotype O:6 (strain 81116 / NCTC 11828)).